The chain runs to 232 residues: Small ribosomal subunit protein uS3 (232 aa).

Residues 39–107 form the KH type-2 domain; that stretch reads IREILHKELK…DVVINIVEIR (69 aa).

Belongs to the universal ribosomal protein uS3 family. As to quaternary structure, part of the 30S ribosomal subunit. Forms a tight complex with proteins S10 and S14.

Its function is as follows. Binds the lower part of the 30S subunit head. Binds mRNA in the 70S ribosome, positioning it for translation. The protein is Small ribosomal subunit protein uS3 of Rhodopseudomonas palustris (strain BisB18).